The primary structure comprises 390 residues: Protein TAB2 homolog, chloroplastic (390 aa).

A chloroplast-targeting transit peptide spans 1–69 (MTTATAIVAG…RSISSESSTE (69 aa)). The disordered stretch occupies residues 16–85 (RRSLPLPNPP…IADEEVEAEN (70 aa)). Positions 61–75 (SISSESSTEASAAAD) are enriched in low complexity.

The protein localises to the plastid. It is found in the chloroplast. In terms of biological role, nuclear genome-encoded factor involved in the biogenesis of photosystem I (PSI). Required for the accumulation of PSI during plant development. Does not seem to be required for the translation of mRNAs of the PSI subunits. The chain is Protein TAB2 homolog, chloroplastic from Zea mays (Maize).